The sequence spans 1078 residues: Rho family-interacting cell polarization regulator 2 (1078 aa).

Residues Ser-46 and Ser-62 each carry the phosphoserine modification. The involved in cell filopodia formation stretch occupies residues Met-80–Gly-138. Positions Asn-108–Leu-137 form a coiled coil. Residue Ser-366 is modified to Phosphoserine. Positions Ser-488–Ser-508 are enriched in polar residues. A disordered region spans residues Ser-488–Arg-534. Positions Leu-509–Glu-525 are enriched in basic and acidic residues. Phosphoserine is present on Ser-582.

It belongs to the RIPOR family. Homooligomer; homooligomerization is regulated by RHOC and leads to the formation of concatemers through the association of N- and C-termini. Interacts (phosphorylated form) with 14-3-3 proteins; these interactions occur during myogenic cell differentiation and also induces T cell proliferation arrest. Interacts (phosphorylated form) with HDAC6; this interaction occurs during early myogenic differentiation, prevents HDAC6 to deacetylate tubulin and also induces T cell proliferation arrest. Interacts with DYSF; this interaction occurs during early myogenic differentiation. Interacts with MYOF. Interacts (via active GTP- or inactive GDP-bound forms) with RHOA; this interaction is direct, blocks the loading of GTP to RHOA and decreases upon chemokine CCL19 stimulation in primary T lymphocytes. Interacts with RHOC. Interacts (via phosphorylated form) with YWHAB; this interaction occurs in a chemokine-dependent manner and does not compete for binding of RIPOR2 with RHOA nor blocks inhibition of RIPOR2-mediated RHOA activity. Interacts with YWHAE. Interacts with YWHAQ. Phosphorylated. Chemokine-induced phosphorylation in neutrophils occurs in a PKC- and AKT-dependent manner, resulting in RIPOR2 interaction with YWHAB and stabilization. Phosphorylated by PKCA, AKT1 and MAPKAPK1A; in vitro. As to expression, expressed in the cochlea. Expressed in inner hair cells and outer hair cells and Hensen's cells (at protein level). Expressed in the brain, cerebellum, spinal cord, retina, heart, spleen liver, kidney, bladder, muscle and lung. Expressed in the cochlea of the inner ear.

The protein localises to the cytoplasm. It localises to the cytoskeleton. Its subcellular location is the cell projection. It is found in the filopodium. The protein resides in the stereocilium. The protein localises to the stereocilium membrane. It localises to the apical cell membrane. Functionally, acts as an inhibitor of the small GTPase RHOA and plays several roles in the regulation of myoblast and hair cell differentiation, lymphocyte T proliferation and neutrophil polarization. Plays a role in fetal mononuclear myoblast differentiation by promoting filopodia and myotube formation. Maintains naive T lymphocytes in a quiescent state and prevents chemokine-induced T lymphocyte responses, such as cell adhesion, polarization and migration. Involved also in the regulation of neutrophil polarization, chemotaxis and adhesion. Required for normal development of inner and outer hair cell stereocilia within the cochlea of the inner ear. Plays a role for maintaining the structural organization of the basal domain of stereocilia. Involved in mechanosensory hair cell function. Required for normal hearing. In Mus musculus (Mouse), this protein is Rho family-interacting cell polarization regulator 2.